The primary structure comprises 308 residues: Dioxygenase peniF (308 aa).

His144 and His225 together coordinate Fe cation.

It belongs to the PhyH family. Homodimer. Fe cation serves as cofactor.

Functionally, dioxygenase; part of the gene cluster that mediates the biosynthesis of penifulvin A, a potent insecticidal sesquiterpene that features a [5.5.5.6]dioxafenestrane ring. The first step of the pathway is performed by the sesquiterpene cyclase peniA that generates the angular triquinane scaffold silphinene via cyclization of the linear farnesyl pyrophosphate (FPP). The cytochrome P450 monooxygenase peniB and the flavin-dependent monooxygenase peniC then catalyze a series of oxidation reactions to transform silphinene into penifulvin A. The dioxygenases peniD and peniF, as well as the acetyltransferase peniE, do not seem to be involved in the biosynthesis of penifulvin A. This Penicillium patulum (Penicillium griseofulvum) protein is Dioxygenase peniF.